Reading from the N-terminus, the 677-residue chain is Methionine--tRNA ligase (677 aa).

The 'HIGH' region motif lies at 15 to 25 (PYANGSIHLGH). Positions 146, 149, 159, and 162 each coordinate Zn(2+). The short motif at 333 to 337 (KMSKS) is the 'KMSKS' region element. ATP is bound at residue Lys-336. The tRNA-binding domain maps to 575–677 (DFAKVDLRVA…AGAKPGHQVK (103 aa)).

This sequence belongs to the class-I aminoacyl-tRNA synthetase family. MetG type 1 subfamily. In terms of assembly, homodimer. It depends on Zn(2+) as a cofactor.

The protein resides in the cytoplasm. The catalysed reaction is tRNA(Met) + L-methionine + ATP = L-methionyl-tRNA(Met) + AMP + diphosphate. In terms of biological role, is required not only for elongation of protein synthesis but also for the initiation of all mRNA translation through initiator tRNA(fMet) aminoacylation. This is Methionine--tRNA ligase from Escherichia coli O6:K15:H31 (strain 536 / UPEC).